The chain runs to 240 residues: Glutathione S-transferase theta-1 (240 aa).

Residues 2 to 82 enclose the GST N-terminal domain; sequence VLELYLDLLS…YLAHKYKVPD (81 aa). Residues H40, 53-54, and 66-67 each bind glutathione; these read KV and ES. In terms of domain architecture, GST C-terminal spans 88–223; sequence DLQARARVDE…ILKVRDCPPA (136 aa).

This sequence belongs to the GST superfamily. Theta family. As to quaternary structure, homodimer. In terms of tissue distribution, in liver, highest expression found in central vein limiting plate hepatocytes. In lung, expressed mainly in club cells of the bronchiolar epithelium and, at low levels, in type II alveolar cells.

Its subcellular location is the cytoplasm. It catalyses the reaction RX + glutathione = an S-substituted glutathione + a halide anion + H(+). In terms of biological role, conjugation of reduced glutathione to a wide number of exogenous and endogenous hydrophobic electrophiles. Also binds steroids, bilirubin, carcinogens and numerous organic anions. Has dichloromethane dehalogenase activity. The sequence is that of Glutathione S-transferase theta-1 (Gstt1) from Rattus norvegicus (Rat).